The sequence spans 156 residues: MSEQNSTEMAFQIQRIYTKDISFEAPKAPQVFQQEWQPEVKLDLDTASSQLADEVYEVVLRVTVTASLGEETAFLCEVQQAGIFSVAGIDGTQLAHCLGAYCPNILFPYARECITSLVSRGTFPQLNLAPVNFDALFMNYLQQQSEGEGAAPHQDA.

Belongs to the SecB family. Homotetramer, a dimer of dimers. One homotetramer interacts with 1 SecA dimer.

The protein resides in the cytoplasm. One of the proteins required for the normal export of preproteins out of the cell cytoplasm. It is a molecular chaperone that binds to a subset of precursor proteins, maintaining them in a translocation-competent state. It also specifically binds to its receptor SecA. The sequence is that of Protein-export protein SecB from Serratia proteamaculans (strain 568).